The chain runs to 558 residues: Glutamine-dependent NAD(+) synthetase (558 aa).

The region spanning 2–262 (FTIALAQLNP…LALLSYDLSS (261 aa)) is the CN hydrolase domain. Catalysis depends on Glu-42, which acts as the Proton acceptor; for glutaminase activity. Residue Lys-117 is the For glutaminase activity of the active site. Residue Tyr-123 coordinates L-glutamine. Cys-153 functions as the Nucleophile; for glutaminase activity in the catalytic mechanism. Residues Ser-190 and Lys-196 each coordinate L-glutamine. Residues 284–558 (ALVLGVGDYL…IAQAFHPQGS (275 aa)) are ligase. 304 to 311 (GLSGGIDS) contributes to the ATP binding site. Deamido-NAD(+) is bound at residue Asn-387. Thr-411 is an ATP binding site. Deamido-NAD(+)-binding residues include Glu-416 and Lys-526.

In the C-terminal section; belongs to the NAD synthetase family.

It catalyses the reaction deamido-NAD(+) + L-glutamine + ATP + H2O = L-glutamate + AMP + diphosphate + NAD(+) + H(+). It participates in cofactor biosynthesis; NAD(+) biosynthesis; NAD(+) from deamido-NAD(+) (L-Gln route): step 1/1. In terms of biological role, catalyzes the ATP-dependent amidation of deamido-NAD to form NAD. Uses L-glutamine as a nitrogen source. The polypeptide is Glutamine-dependent NAD(+) synthetase (Synechocystis sp. (strain ATCC 27184 / PCC 6803 / Kazusa)).